The following is a 354-amino-acid chain: 4-hydroxy-2-oxovalerate aldolase 6 (354 aa).

The 253-residue stretch at 10-262 (VRIVDTTLRD…ATGLDVMATL (253 aa)) folds into the Pyruvate carboxyltransferase domain. 18-19 (RD) is a substrate binding site. Asp-19 is a binding site for Mn(2+). His-22 serves as the catalytic Proton acceptor. Residues Ser-172 and His-201 each contribute to the substrate site. Residues His-201 and His-203 each coordinate Mn(2+). Substrate is bound at residue Tyr-292.

The protein belongs to the 4-hydroxy-2-oxovalerate aldolase family.

It catalyses the reaction (S)-4-hydroxy-2-oxopentanoate = acetaldehyde + pyruvate. The protein is 4-hydroxy-2-oxovalerate aldolase 6 of Rhodococcus jostii (strain RHA1).